We begin with the raw amino-acid sequence, 678 residues long: Catalase (678 aa).

A compositionally biased stretch (basic and acidic residues) spans 1 to 26; that stretch reads MSNEREMQNKKDQQLESFRVEDEGKK. A disordered region spans residues 1-32; sequence MSNEREMQNKKDQQLESFRVEDEGKKLTTNQG. Catalysis depends on residues His-75 and Asn-148. Tyr-362 is a binding site for heme.

This sequence belongs to the catalase family. HPII subfamily. Requires heme as cofactor.

Its subcellular location is the cytoplasm. It catalyses the reaction 2 H2O2 = O2 + 2 H2O. Its function is as follows. Decomposes hydrogen peroxide into water and oxygen; serves to protect cells from the toxic effects of hydrogen peroxide. This chain is Catalase (katE), found in Alkalihalophilus pseudofirmus (strain ATCC BAA-2126 / JCM 17055 / OF4) (Bacillus pseudofirmus).